The sequence spans 324 residues: MAFAKISQVAHYVPEQVVTNHDLAQIMDTNDEWISSRTGIRQRHISRTESTSDLATEVAKKLMAKAGITGEELDFIILATITPDSMMPSTAARVQANIGANKAFAFDLTAACSGFVFALSTAEKFIASGRFQKGLVIGSETLSKAVDWSDRSTAVLFGDGAGGVLLEASEQEHFLAESLNSDGSRSECLTYGHSGLHSPFSDQESADSFLKMDGRTVFDFAIRDVAKSIKQTIDESPIEVTDLDYLLLHQANDRILDKMARKIGVDRAKLPANMMEYGNTSAASIPILLSECVEQGLIPLDGSQTVLLSGFGGGLTWGTLILTI.

Residues cysteine 112 and histidine 249 contribute to the active site. Residues 250-254 (QANDR) form an ACP-binding region. Residue asparagine 279 is part of the active site.

Belongs to the thiolase-like superfamily. FabH family. Homodimer.

It is found in the cytoplasm. It carries out the reaction malonyl-[ACP] + acetyl-CoA + H(+) = 3-oxobutanoyl-[ACP] + CO2 + CoA. The protein operates within lipid metabolism; fatty acid biosynthesis. Its function is as follows. Catalyzes the condensation reaction of fatty acid synthesis by the addition to an acyl acceptor of two carbons from malonyl-ACP. Catalyzes the first condensation reaction which initiates fatty acid synthesis and may therefore play a role in governing the total rate of fatty acid production. Possesses both acetoacetyl-ACP synthase and acetyl transacylase activities. Its substrate specificity determines the biosynthesis of branched-chain and/or straight-chain of fatty acids. The chain is Beta-ketoacyl-[acyl-carrier-protein] synthase III from Streptococcus pneumoniae serotype 2 (strain D39 / NCTC 7466).